The chain runs to 901 residues: Protein translocase subunit SecA (901 aa).

ATP is bound by residues Gln87, 105–109, and Asp512; that span reads GEGKT. Positions 859–901 are disordered; the sequence is HQDDDSAAAAALAAQTGERKVGRNDPCPCGSGKKYKQCHGRLQ. Positions 885, 887, 896, and 897 each coordinate Zn(2+). Residues 891–901 are compositionally biased toward basic residues; that stretch reads KKYKQCHGRLQ.

It belongs to the SecA family. As to quaternary structure, monomer and homodimer. Part of the essential Sec protein translocation apparatus which comprises SecA, SecYEG and auxiliary proteins SecDF-YajC and YidC. It depends on Zn(2+) as a cofactor.

The protein resides in the cell inner membrane. The protein localises to the cytoplasm. The catalysed reaction is ATP + H2O + cellular proteinSide 1 = ADP + phosphate + cellular proteinSide 2.. Part of the Sec protein translocase complex. Interacts with the SecYEG preprotein conducting channel. Has a central role in coupling the hydrolysis of ATP to the transfer of proteins into and across the cell membrane, serving both as a receptor for the preprotein-SecB complex and as an ATP-driven molecular motor driving the stepwise translocation of polypeptide chains across the membrane. This is Protein translocase subunit SecA from Escherichia coli O157:H7.